The chain runs to 354 residues: Ribosomal RNA large subunit methyltransferase M (354 aa).

S-adenosyl-L-methionine is bound by residues Ser-183, 216–219 (SPGG), Asp-235, Asp-255, and Asp-271. Lys-300 functions as the Proton acceptor in the catalytic mechanism.

This sequence belongs to the class I-like SAM-binding methyltransferase superfamily. RNA methyltransferase RlmE family. RlmM subfamily. In terms of assembly, monomer.

The protein localises to the cytoplasm. It catalyses the reaction cytidine(2498) in 23S rRNA + S-adenosyl-L-methionine = 2'-O-methylcytidine(2498) in 23S rRNA + S-adenosyl-L-homocysteine + H(+). Functionally, catalyzes the 2'-O-methylation at nucleotide C2498 in 23S rRNA. The chain is Ribosomal RNA large subunit methyltransferase M from Pseudomonas putida (strain ATCC 47054 / DSM 6125 / CFBP 8728 / NCIMB 11950 / KT2440).